The primary structure comprises 61 residues: Protein translocase subunit SecE (61 aa).

A helical transmembrane segment spans residues 38-58; the sequence is GIGMILIGTIGMIIRIIGYLV.

The protein belongs to the SecE/SEC61-gamma family. Component of the Sec protein translocase complex. Heterotrimer consisting of SecY (alpha), SecG (beta) and SecE (gamma) subunits. The heterotrimers can form oligomers, although 1 heterotrimer is thought to be able to translocate proteins. Interacts with the ribosome. May interact with SecDF, and other proteins may be involved.

It is found in the cell membrane. In terms of biological role, essential subunit of the Sec protein translocation channel SecYEG. Clamps together the 2 halves of SecY. May contact the channel plug during translocation. The chain is Protein translocase subunit SecE from Thermococcus kodakarensis (strain ATCC BAA-918 / JCM 12380 / KOD1) (Pyrococcus kodakaraensis (strain KOD1)).